The sequence spans 63 residues: Prokaryotic ubiquitin-like protein Pup 1 (63 aa).

Basic and acidic residues-rich tracts occupy residues 1 to 12 and 24 to 33; these read MSQEKVQRHGGG and GQERREKLGE. A disordered region spans residues 1 to 35; that stretch reads MSQEKVQRHGGGDGEEESGPEAAGQERREKLGEDV. Positions 20-57 are ARC ATPase binding; that stretch reads PEAAGQERREKLGEDVDAILDEIDDVLEENAEDFVRAY. Positions 25–51 form a coiled coil; it reads QERREKLGEDVDAILDEIDDVLEENAE. Deamidated glutamine is present on Q63. Q63 participates in a covalent cross-link: Isoglutamyl lysine isopeptide (Gln-Lys) (interchain with K-? in acceptor proteins).

This sequence belongs to the prokaryotic ubiquitin-like protein family. Strongly interacts with the proteasome-associated ATPase ARC through a hydrophobic interface; the interacting region of Pup lies in its C-terminal half. There is one Pup binding site per ARC hexamer ring. In terms of processing, is modified by deamidation of its C-terminal glutamine to glutamate by the deamidase Dop, a prerequisite to the subsequent pupylation process.

It participates in protein degradation; proteasomal Pup-dependent pathway. Protein modifier that is covalently attached to lysine residues of substrate proteins, thereby targeting them for proteasomal degradation. The tagging system is termed pupylation. The sequence is that of Prokaryotic ubiquitin-like protein Pup 1 from Saccharopolyspora erythraea (strain ATCC 11635 / DSM 40517 / JCM 4748 / NBRC 13426 / NCIMB 8594 / NRRL 2338).